We begin with the raw amino-acid sequence, 214 residues long: Cytochrome c biogenesis ATP-binding export protein CcmA (214 aa).

Residues 4 to 214 form the ABC transporter domain; it reads LAVDQLTVSR…FDHGFDGAFL (211 aa). 36 to 43 provides a ligand contact to ATP; sequence GPNGIGKT.

Belongs to the ABC transporter superfamily. CcmA exporter (TC 3.A.1.107) family. As to quaternary structure, the complex is composed of two ATP-binding proteins (CcmA) and two transmembrane proteins (CcmB).

The protein resides in the cell inner membrane. It carries out the reaction heme b(in) + ATP + H2O = heme b(out) + ADP + phosphate + H(+). Its function is as follows. Part of the ABC transporter complex CcmAB involved in the biogenesis of c-type cytochromes; once thought to export heme, this seems not to be the case, but its exact role is uncertain. Responsible for energy coupling to the transport system. The protein is Cytochrome c biogenesis ATP-binding export protein CcmA of Rhodobacter capsulatus (strain ATCC BAA-309 / NBRC 16581 / SB1003).